The sequence spans 270 residues: Glucosamine-6-phosphate deaminase (270 aa).

Catalysis depends on D68, which acts as the Proton acceptor; for enolization step. D145 functions as the For ring-opening step in the catalytic mechanism. Residue H147 is the Proton acceptor; for ring-opening step of the active site. The active-site For ring-opening step is the E152.

Belongs to the glucosamine/galactosamine-6-phosphate isomerase family. NagB subfamily.

It catalyses the reaction alpha-D-glucosamine 6-phosphate + H2O = beta-D-fructose 6-phosphate + NH4(+). The protein operates within amino-sugar metabolism; N-acetylneuraminate degradation; D-fructose 6-phosphate from N-acetylneuraminate: step 5/5. In terms of biological role, catalyzes the reversible isomerization-deamination of glucosamine 6-phosphate (GlcN6P) to form fructose 6-phosphate (Fru6P) and ammonium ion. This chain is Glucosamine-6-phosphate deaminase, found in Bifidobacterium longum subsp. infantis (strain ATCC 15697 / DSM 20088 / JCM 1222 / NCTC 11817 / S12).